The primary structure comprises 282 residues: Uridylate-specific endoribonuclease B (282 aa).

An EndoU domain is found at 4-278 (GDRELSALIQ…IGTTYPVPVK (275 aa)). Active-site residues include H156, H172, and K218.

It belongs to the ENDOU family. Monomer. Mn(2+) is required as a cofactor.

It carries out the reaction ribonucleotidyl-uridine-RNA = a 5'-end dephospho-uridine-RNA + a 3'-end 2',3'-cyclophospho-ribonucleotide-RNA. Its function is as follows. Endoribonuclease that cleaves single-stranded RNAs at 5' of uridylates and releases a product with a 2',3'-cyclic phosphate at the 3'-end. The UU and GU sites are more efficiently cleaved than CU and AU sites. This Danio rerio (Zebrafish) protein is Uridylate-specific endoribonuclease B (endoub).